Reading from the N-terminus, the 107-residue chain is FK506-binding protein 1 (107 aa).

One can recognise a PPIase FKBP-type domain in the interval 19-107 (GSNVTVHHAG…VFEVELITFK (89 aa)).

This sequence belongs to the FKBP-type PPIase family.

It catalyses the reaction [protein]-peptidylproline (omega=180) = [protein]-peptidylproline (omega=0). With respect to regulation, inhibited by both FK506 and rapamycin. PPIases accelerate the folding of proteins by catalyzing the cis-trans isomerization of proline imidic peptide bonds in oligopeptides. The sequence is that of FK506-binding protein 1 (fkbp1) from Dictyostelium discoideum (Social amoeba).